A 309-amino-acid chain; its full sequence is 5-formyl-3-hydroxy-2-methylpyridine 4-carboxylate 5-dehydrogenase (309 aa).

Residues 12–13 (TM), Asp32, 87–89 (VPE), and Lys94 contribute to the NAD(+) site.

The protein belongs to the 3-hydroxyacyl-CoA dehydrogenase family. Homodimer.

The catalysed reaction is 5-formyl-3-hydroxy-2-methylpyridine-4-carboxylate + NAD(+) + H2O = 5-hydroxy-6-methylpyridine-3,4-dicarboxylate + NADH + 2 H(+). It catalyses the reaction 5-formyl-3-hydroxy-2-methylpyridine-4-carboxylate + NADH + H(+) = 4-pyridoxate + NAD(+). It participates in cofactor degradation; B6 vitamer degradation. In terms of biological role, involved in the degradation of pyridoxine (vitamin B(6)). Catalyzes the oxidation of 5-formyl-3-hydroxy-2-methylpyridine-4-carboxylate (FHMPC) by NAD(+) to 5-hydroxy-6-methylpyridine-3,4-dicarboxylate (HMPDC). Can also catalyze the reduction of FHMPC by NADH to 4-pyridoxic acid. The chain is 5-formyl-3-hydroxy-2-methylpyridine 4-carboxylate 5-dehydrogenase from Mesorhizobium japonicum (strain LMG 29417 / CECT 9101 / MAFF 303099) (Mesorhizobium loti (strain MAFF 303099)).